The following is a 384-amino-acid chain: Cyclin-J (384 aa).

The region spanning 15–143 is the Cyclin N-terminal domain; it reads DIHQTLRYKE…LLETFEWNLC (129 aa).

The protein belongs to the cyclin family. Cyclin J subfamily.

This is Cyclin-J (ccnj) from Xenopus laevis (African clawed frog).